A 450-amino-acid polypeptide reads, in one-letter code: Envelope glycoprotein M (450 aa).

Residues 1 to 31 (MARRGAAVAEEPLLPSSGIVGIGPIEGINWR) lie on the Intravirion side of the membrane. Residues 32 to 52 (TWLVQVFCFALTTSVLFITLV) traverse the membrane as a helical segment. The Virion surface segment spans residues 53-101 (TASLPQTGYPCFYGSLVDYTQKNHSVVDGVWMRQIAGGVAPTLFLETTS). Residues 102-122 (LVAFLYYTTLVLVAISFYLII) form a helical membrane-spanning segment. The Intravirion portion of the chain corresponds to 123–153 (SAVLVRRYARGKECTAVAGCTRPTTTLIASH). A helical transmembrane segment spans residues 154 to 174 (VTLVLGTLATWLLQVVILLLS). Residues 175–178 (HKQA) are Virion surface-facing. Residues 179–199 (VLGAAVYVVHFVSLVFFCMSF) traverse the membrane as a helical segment. Residues 200-236 (SGLGTASAQYSSNLRILKTNLPALHKMAGPGRAVMTN) lie on the Intravirion side of the membrane. Residues 237–257 (LGMGMLGISLPILSLMLGIIL) traverse the membrane as a helical segment. Residues 258-270 (ANSFHITLWQTVT) lie on the Virion surface side of the membrane. Residues 271 to 291 (VAVGVFVALGLMFLIIVELIV) form a helical membrane-spanning segment. Over 292-294 (SHY) the chain is Intravirion. The chain crosses the membrane as a helical span at residues 295–315 (VHVLVGPALAVLVASSTLAVA). The Virion surface portion of the chain corresponds to 316 to 334 (THSYFVHFHAMVSVQAPNL). Residues 335 to 355 (ATASKAIVGIMAVISIIMLVV) form a helical membrane-spanning segment. The Intravirion portion of the chain corresponds to 356 to 450 (RLVRAIMFHK…PERSHRREYR (95 aa)).

It belongs to the herpesviridae glycoprotein M family. As to quaternary structure, interacts (via N-terminus) with gN (via N-terminus). The gM-gN heterodimer forms the gCII complex.

It is found in the virion membrane. Its subcellular location is the host Golgi apparatus. The protein resides in the host trans-Golgi network. It localises to the host endosome membrane. The protein localises to the host nucleus inner membrane. Its function is as follows. Envelope glycoprotein important for virion assembly and egress. Plays a role in the correct incorporation of gH-gL into virion membrane. Directs the glycoprotein N (gN) to the host trans-Golgi network. The polypeptide is Envelope glycoprotein M (Equus caballus (Horse)).